Reading from the N-terminus, the 420-residue chain is MDTKRCFANRFDDYQGSLLAGQCEEAVAPLVTATIERILQELPPLGGGAEARGATAGASACQGGLYGGVAGVAYMLYHVSQSPLFATARERYLRSAKRLIDACARAEEWGEPDADTRAAFLLGGAGVYAVATLVYHALGRSDYVQPLGKFRALCAVCAPVSFLECGSDELFVGRAGYLCAALVLKQKLAQEVLTPAQIKSICQAILDSGKQYAIKKRKPFPLMYSYYGTEYLGAAHGLSSILQMLLSYHEHLKPSDRELVWQSVDFLMEQEQNCNWPPELGETIERENELVHWCHGAPGIAYLFAKAYLVSKKPQYLDTCIRCGELTWQKGLLKKGPGICHGVAGSAYVFLLLYRLTGNSKYIYRAQRFAQFLFTEEFKAGSRVLESIYSLYEGFSGTVCFLIDLLQPNQAEFPLFSVFV.

This sequence belongs to the LanC-like protein family.

This chain is LanC-like protein 3 (LANCL3), found in Homo sapiens (Human).